A 156-amino-acid chain; its full sequence is Small ribosomal subunit protein uS7 (156 aa).

It belongs to the universal ribosomal protein uS7 family. As to quaternary structure, part of the 30S ribosomal subunit. Contacts proteins S9 and S11.

Its function is as follows. One of the primary rRNA binding proteins, it binds directly to 16S rRNA where it nucleates assembly of the head domain of the 30S subunit. Is located at the subunit interface close to the decoding center, probably blocks exit of the E-site tRNA. The chain is Small ribosomal subunit protein uS7 from Acinetobacter baumannii (strain AB307-0294).